The sequence spans 312 residues: Small kinetochore-associated protein (312 aa).

The disordered stretch occupies residues 1 to 171 (MAAPEAEAQE…PFNKQKPEEE (171 aa)). The segment covering 131–143 (DVTKVTKSRRENG) has biased composition (basic and acidic residues). The interaction with SPAG5 stretch occupies residues 156-312 (LRNSYKPFNK…LEEMEQLLEM (157 aa)). Coiled coils occupy residues 166–210 (QKPE…LEKF) and 246–287 (LLET…QFLE).

Part of an astrin (SPAG5)-kinastrin (SKAP) complex containing KNSTRN, SPAG5, PLK1, DYNLL1 and SGO2A. Interacts with SPAG5. Directly binds to microtubules, although at relatively low affinity. Interacts with CENPE; this interaction greatly favors microtubule-binding. Interacts with DSN1/MIS13; leading to localization to kinetochores. Interacts with MAPRE1/EB1; leading to localization to the microtubule plus ends. Interacts with PRPF19. Interacts with DYNLL1. Interacts with MAP4.

It localises to the nucleus. It is found in the chromosome. The protein resides in the centromere. The protein localises to the kinetochore. Its subcellular location is the cytoplasm. It localises to the cytoskeleton. It is found in the spindle pole. The protein resides in the microtubule organizing center. In terms of biological role, essential component of the mitotic spindle required for faithful chromosome segregation and progression into anaphase. Promotes the metaphase-to-anaphase transition and is required for chromosome alignment, normal timing of sister chromatid segregation, and maintenance of spindle pole architecture. The astrin (SPAG5)-kinastrin (SKAP) complex promotes stable microtubule-kinetochore attachments. Required for kinetochore oscillations and dynamics of microtubule plus-ends during live cell mitosis, possibly by forming a link between spindle microtubule plus-ends and mitotic chromosomes to achieve faithful cell division. This is Small kinetochore-associated protein (Knstrn) from Mus musculus (Mouse).